Reading from the N-terminus, the 119-residue chain is Large ribosomal subunit protein bL20 (119 aa).

Belongs to the bacterial ribosomal protein bL20 family.

In terms of biological role, binds directly to 23S ribosomal RNA and is necessary for the in vitro assembly process of the 50S ribosomal subunit. It is not involved in the protein synthesizing functions of that subunit. The polypeptide is Large ribosomal subunit protein bL20 (Colwellia psychrerythraea (strain 34H / ATCC BAA-681) (Vibrio psychroerythus)).